The following is a 443-amino-acid chain: Ribitol-5-phosphate xylosyltransferase 1 (443 aa).

Topologically, residues 1–9 are cytoplasmic; the sequence is MRLTRKRLC. A helical; Signal-anchor for type II membrane protein transmembrane segment spans residues 10–30; it reads SFLIALYCLFSLYAAYHVFFG. At 31 to 443 the chain is on the extracellular side; it reads RRRQAPAGSP…ESSFLMNNKS (413 aa). The interval 35–76 is disordered; that stretch reads APAGSPRGLRKGAAPARERRGREQSTLESEEWNPWEGDEKNE. A compositionally biased stretch (basic and acidic residues) spans 50–59; that stretch reads ARERRGREQS.

It belongs to the RXYLT1 family. Forms a complex composed of FKTN/fukutin, FKRP and RXYLT1/TMEM5.

The protein resides in the golgi apparatus membrane. The catalysed reaction is 3-O-[Rib-ol-P-Rib-ol-P-3-beta-D-GalNAc-(1-&gt;3)-beta-D-GlcNAc-(1-&gt;4)-(O-6-P-alpha-D-Man)]-Thr-[protein] + UDP-alpha-D-xylose = 3-O-[beta-D-Xyl-(1-&gt;4)-Rib-ol-P-Rib-ol-P-3-beta-D-GalNAc-(1-&gt;3)-beta-D-GlcNAc-(1-&gt;4)-(O-6-P-alpha-D-Man)]-Thr-[protein] + UDP + H(+). It participates in protein modification; protein glycosylation. Its function is as follows. Acts as a UDP-D-xylose:ribitol-5-phosphate beta1,4-xylosyltransferase, which catalyzes the transfer of UDP-D-xylose to ribitol 5-phosphate (Rbo5P) to form the Xylbeta1-4Rbo5P linkage on O-mannosyl glycan. Participates in the biosynthesis of the phosphorylated O-mannosyl trisaccharide (N-acetylgalactosamine-beta-3-N-acetylglucosamine-beta-4-(phosphate-6-)mannose), a carbohydrate structure present in alpha-dystroglycan (DAG1), which is required for binding laminin G-like domain-containing extracellular proteins with high affinity. This is Ribitol-5-phosphate xylosyltransferase 1 from Homo sapiens (Human).